The chain runs to 224 residues: Probable GTP-binding protein EngB (224 aa).

Residues 31–205 (IGVEIAFAGR…LSILNDWCHP (175 aa)) enclose the EngB-type G domain. Residues 39 to 46 (GRSNAGKS), 66 to 70 (GRTQL), 84 to 87 (DLPG), 151 to 154 (TKSD), and 184 to 186 (LSS) contribute to the GTP site. S46 and T68 together coordinate Mg(2+).

It belongs to the TRAFAC class TrmE-Era-EngA-EngB-Septin-like GTPase superfamily. EngB GTPase family. The cofactor is Mg(2+).

Its function is as follows. Necessary for normal cell division and for the maintenance of normal septation. This is Probable GTP-binding protein EngB from Shewanella frigidimarina (strain NCIMB 400).